Consider the following 111-residue polypeptide: Small ribosomal subunit protein bS16 (111 aa).

The protein belongs to the bacterial ribosomal protein bS16 family.

This is Small ribosomal subunit protein bS16 from Rickettsia canadensis (strain McKiel).